The sequence spans 72 residues: Translation initiation factor IF-1 (72 aa).

An S1-like domain is found at 1 to 72 (MSKEELIEFE…TKGRITYRFK (72 aa)).

It belongs to the IF-1 family. Component of the 30S ribosomal translation pre-initiation complex which assembles on the 30S ribosome in the order IF-2 and IF-3, IF-1 and N-formylmethionyl-tRNA(fMet); mRNA recruitment can occur at any time during PIC assembly.

The protein resides in the cytoplasm. Its function is as follows. One of the essential components for the initiation of protein synthesis. Stabilizes the binding of IF-2 and IF-3 on the 30S subunit to which N-formylmethionyl-tRNA(fMet) subsequently binds. Helps modulate mRNA selection, yielding the 30S pre-initiation complex (PIC). Upon addition of the 50S ribosomal subunit IF-1, IF-2 and IF-3 are released leaving the mature 70S translation initiation complex. This is Translation initiation factor IF-1 from Hyphomonas neptunium (strain ATCC 15444).